Consider the following 99-residue polypeptide: Nucleoid-associated protein EbfC (99 aa).

The protein belongs to the YbaB/EbfC family. In terms of assembly, homodimer.

The protein resides in the cytoplasm. It is found in the nucleoid. Functionally, binds to DNA and alters its conformation. May be involved in regulation of gene expression, nucleoid organization and DNA protection. This is Nucleoid-associated protein EbfC from Borreliella afzelii (strain PKo) (Borrelia afzelii).